We begin with the raw amino-acid sequence, 124 residues long: Large ribosomal subunit protein bL19 (124 aa).

This sequence belongs to the bacterial ribosomal protein bL19 family.

Functionally, this protein is located at the 30S-50S ribosomal subunit interface and may play a role in the structure and function of the aminoacyl-tRNA binding site. The chain is Large ribosomal subunit protein bL19 from Cereibacter sphaeroides (strain ATCC 17029 / ATH 2.4.9) (Rhodobacter sphaeroides).